Here is a 328-residue protein sequence, read N- to C-terminus: C-type lectin domain family 11 member A (328 aa).

The N-terminal stretch at 1 to 21 (MQAAWLLGALLVPHLLSFGHG) is a signal peptide. The tract at residues 58 to 111 (PTGVGNKDNLAENSEGKEVWEATETQGEEEEEETTTTPSSSPTPFPSPSPTSED) is disordered. Residues 188–325 (LGHKCFLLSR…CERRLYFVCE (138 aa)) form the C-type lectin domain. 2 cysteine pairs are disulfide-bonded: cysteine 209-cysteine 324 and cysteine 301-cysteine 316.

In terms of processing, O-glycosylated. Probably sulfated on the O-glycans.

The protein localises to the cytoplasm. The protein resides in the secreted. Its function is as follows. Promotes osteogenesis by stimulating the differentiation of mesenchymal progenitors into mature osteoblasts. Important for repair and maintenance of adult bone. This is C-type lectin domain family 11 member A (Clec11a) from Rattus norvegicus (Rat).